Reading from the N-terminus, the 91-residue chain is Small ribosomal subunit protein uS19 (91 aa).

This sequence belongs to the universal ribosomal protein uS19 family.

Functionally, protein S19 forms a complex with S13 that binds strongly to the 16S ribosomal RNA. This chain is Small ribosomal subunit protein uS19, found in Chromohalobacter salexigens (strain ATCC BAA-138 / DSM 3043 / CIP 106854 / NCIMB 13768 / 1H11).